The sequence spans 136 residues: ATP synthase epsilon chain (136 aa).

Residues 106-136 (MEGQPSSPEKLKAQQQLNEARARLQASKTAD) are disordered.

It belongs to the ATPase epsilon chain family. F-type ATPases have 2 components, CF(1) - the catalytic core - and CF(0) - the membrane proton channel. CF(1) has five subunits: alpha(3), beta(3), gamma(1), delta(1), epsilon(1). CF(0) has three main subunits: a, b and c.

Its subcellular location is the cellular thylakoid membrane. Produces ATP from ADP in the presence of a proton gradient across the membrane. The protein is ATP synthase epsilon chain of Synechococcus sp. (strain CC9605).